The primary structure comprises 84 residues: Small ribosomal subunit protein bS16 (84 aa).

Belongs to the bacterial ribosomal protein bS16 family.

The chain is Small ribosomal subunit protein bS16 from Desulforapulum autotrophicum (strain ATCC 43914 / DSM 3382 / VKM B-1955 / HRM2) (Desulfobacterium autotrophicum).